The following is a 2541-amino-acid chain: Talin-1 (2541 aa).

The 318-residue stretch at 86 to 403 (RPLKIRMLDG…GYIDIILKKK (318 aa)) folds into the FERM domain. Position 167 is a phosphothreonine (Thr167). Residues 280–435 (FQAHKNCGQM…PKKSTVLQQQ (156 aa)) are interaction with LAYN. Residues Ser405, Ser425, Ser446, Ser620, and Ser729 each carry the phosphoserine modification. The helical bundle R1 stretch occupies residues 482 to 655 (RGHMPPLTSA…QASGELLQQI (174 aa)). Residues 656 to 786 (GESDTDPHFQ…ALNELLQHVK (131 aa)) form a helical bundle R2 region. Residues 787–911 (AHATGAGPAG…NAAAQNAIKK (125 aa)) are helical bundle R3. The segment at 913-1044 (LVQRLEHAAK…RTAAQKAQEA (132 aa)) is helical bundle R4. Residue Ser1021 is modified to Phosphoserine. Positions 1046–1206 (GPLEMDSALS…NRCVSCLPGQ (161 aa)) are helical bundle R5. Tyr1116 is modified (phosphotyrosine). Phosphothreonine is present on Thr1142. A phosphoserine mark is found at Ser1201 and Ser1225. The helical bundle R6 stretch occupies residues 1207-1357 (RDVDNALRAV…QLITMCTQQA (151 aa)). Thr1263 carries the post-translational modification Phosphothreonine. Position 1323 is a phosphoserine (Ser1323). An interaction with SYNM region spans residues 1327-1948 (AAPNLKSQLA…CSPSDAYTKK (622 aa)). The segment at 1358–1453 (PGQKECDNAL…AYLVGVSDPN (96 aa)) is helical bundle R7A. Residues 1359 to 1659 (GQKECDNALR…SMRDKAPGQL (301 aa)) are interaction with VCL and F-actin. Positions 1461–1580 (LVEPTQFARA…NLSAFASNPE (120 aa)) are helical bundle R8. Lys1544 bears the N6-acetyllysine mark. Residues 1581–1653 (FSSIPAQISP…IKKLITSMRD (73 aa)) form a helical bundle R7B region. The segment at 1655–1822 (APGQLECETA…TLNEAASAAG (168 aa)) is helical bundle R9. A helical bundle R10 region spans residues 1823 to 1973 (VVGGMVDSIT…VLAALQAGNR (151 aa)). A Phosphoserine modification is found at Ser1849. Thr1855 bears the Phosphothreonine mark. Phosphoserine is present on Ser1878. Residues 1974–2140 (GTQACITAAS…TVKAVEDEAT (167 aa)) are helical bundle R11. Lys2031 carries the post-translational modification N6-acetyllysine. Ser2040 carries the post-translational modification Phosphoserine. Lys2115 carries the N6-acetyllysine modification. Positions 2141–2294 (KGTRALEATT…QAAEAMKGTE (154 aa)) are helical bundle R12. Positions 2293 to 2533 (TEWVDPEDPT…QIRQQQYKFL (241 aa)) constitute an I/LWEQ domain. The helical bundle R13 stretch occupies residues 2300 to 2482 (DPTVIAENEL…AAQKAAAFEE (183 aa)).

As to quaternary structure, part of a complex composed of THSD1, PTK2/FAK1, TLN1 and VCL. Interacts with THSD1; this promotes interaction with PTK2/FAK1 and VCL. Binds with high affinity to VCL and with low affinity to integrins. Interacts with APBB1IP; this inhibits VCL binding. Interacts with PTK2/FAK1. Interacts with PIP5K1C and NRAP. Interacts with LAYN. Interacts with SYNM. Interacts with ITGB1; the interaction is prevented by competitive binding of ITGB1BP1. Interacts with SVEP1. Interacts (via R7 domain) with KANK1 or KANK2 (via KN motif); this interaction likely initiates the assembly of cortical microtubule stabilization complexes (CMSCs) at the vicinity of focal adhesions. Interacts with VCL; shows reduced VCL binding compared to isoform 2. Interacts with APBB1IP; shows similar level of binding compared to isoform 2. In terms of assembly, interacts with VCL; shows enhanced VCL binding compared to isoform 1. Interacts with APBB1IP; shows similar level of binding compared to isoform 1. As to quaternary structure, (Microbial infection) Interacts with human cytomegalovirus protein UL135. As to expression, expressed at low to non-detectable levels in many tissues but highly expressed in skin and pancreas with other tissues including kidney cortex, endocervix, testis, pituitary, liver, and spleen also showing robust expression.

The protein resides in the cell projection. Its subcellular location is the ruffle membrane. It localises to the cytoplasm. It is found in the cytoskeleton. The protein localises to the cell surface. The protein resides in the cell junction. Its subcellular location is the focal adhesion. Its function is as follows. High molecular weight cytoskeletal protein concentrated at regions of cell-matrix and cell-cell contacts. Involved in connections of major cytoskeletal structures to the plasma membrane. With KANK1 co-organize the assembly of cortical microtubule stabilizing complexes (CMSCs) positioned to control microtubule-actin crosstalk at focal adhesions (FAs) rims. This is Talin-1 (TLN1) from Homo sapiens (Human).